Reading from the N-terminus, the 78-residue chain is UPF0154 protein SSU98_1719 (78 aa).

Residues 3–23 (LGLAILLIVLAFAGGVALGIY) form a helical membrane-spanning segment.

This sequence belongs to the UPF0154 family.

Its subcellular location is the cell membrane. In Streptococcus suis (strain 98HAH33), this protein is UPF0154 protein SSU98_1719.